The primary structure comprises 449 residues: Phosphoglucosamine mutase (449 aa).

The active-site Phosphoserine intermediate is the Ser101. Positions 101, 240, 242, and 244 each coordinate Mg(2+). Ser101 bears the Phosphoserine mark.

This sequence belongs to the phosphohexose mutase family. Mg(2+) serves as cofactor. In terms of processing, activated by phosphorylation.

It catalyses the reaction alpha-D-glucosamine 1-phosphate = D-glucosamine 6-phosphate. Functionally, catalyzes the conversion of glucosamine-6-phosphate to glucosamine-1-phosphate. The protein is Phosphoglucosamine mutase of Streptococcus suis (strain 98HAH33).